The chain runs to 213 residues: ATP synthase peripheral stalk subunit OSCP, mitochondrial (213 aa).

A mitochondrion-targeting transit peptide spans 1–23; it reads MAAPAVSGFSRQVRCFSTSVVRP. Residues 5–23 carry the SIFI-degron motif; that stretch reads AVSGFSRQVRCFSTSVVRP. Residues Lys54, Lys60, Lys70, and Lys73 each carry the N6-acetyllysine modification. Residue Lys90 is modified to N6-succinyllysine. 2 positions are modified to N6-acetyllysine; alternate: Lys100 and Lys158. N6-succinyllysine; alternate occurs at positions 100 and 158. N6-acetyllysine occurs at positions 172, 176, and 192. Residue Lys199 is modified to N6-succinyllysine.

Belongs to the ATPase delta chain family. Component of the ATP synthase complex composed at least of ATP5F1A/subunit alpha, ATP5F1B/subunit beta, ATP5MC1/subunit c (homooctomer), MT-ATP6/subunit a, MT-ATP8/subunit 8, ATP5ME/subunit e, ATP5MF/subunit f, ATP5MG/subunit g, ATP5MK/subunit k, ATP5MJ/subunit j, ATP5F1C/subunit gamma, ATP5F1D/subunit delta, ATP5F1E/subunit epsilon, ATP5PF/subunit F6, ATP5PB/subunit b, ATP5PD/subunit d, ATP5PO/subunit OSCP. ATP synthase complex consists of a soluble F(1) head domain (subunits alpha(3) and beta(3)) - the catalytic core - and a membrane F(0) domain - the membrane proton channel (subunits c, a, 8, e, f, g, k and j). These two domains are linked by a central stalk (subunits gamma, delta, and epsilon) rotating inside the F1 region and a stationary peripheral stalk (subunits F6, b, d, and OSCP). In terms of processing, in response to mitochondrial stress, the precursor protein is ubiquitinated by the SIFI complex in the cytoplasm before mitochondrial import, leading to its degradation. Within the SIFI complex, UBR4 initiates ubiquitin chain that are further elongated or branched by KCMF1.

It localises to the mitochondrion. It is found in the mitochondrion inner membrane. Its function is as follows. Subunit OSCP, of the mitochondrial membrane ATP synthase complex (F(1)F(0) ATP synthase or Complex V) that produces ATP from ADP in the presence of a proton gradient across the membrane which is generated by electron transport complexes of the respiratory chain. ATP synthase complex consist of a soluble F(1) head domain - the catalytic core - and a membrane F(1) domain - the membrane proton channel. These two domains are linked by a central stalk rotating inside the F(1) region and a stationary peripheral stalk. During catalysis, ATP synthesis in the catalytic domain of F(1) is coupled via a rotary mechanism of the central stalk subunits to proton translocation. In vivo, can only synthesize ATP although its ATP hydrolase activity can be activated artificially in vitro. Part of the complex F(0) domain. Part of the complex F(0) domain and the peripheric stalk, which acts as a stator to hold the catalytic alpha(3)beta(3) subcomplex and subunit a/ATP6 static relative to the rotary elements. The polypeptide is ATP synthase peripheral stalk subunit OSCP, mitochondrial (Rhinolophus ferrumequinum (Greater horseshoe bat)).